Reading from the N-terminus, the 368-residue chain is Cytochrome b (368 aa).

4 helical membrane passes run 32–52, 76–98, 112–132, and 174–194; these read FGFLVAMTFVLQIITGITLAF, WEFRMLHATTASFVFLCILIHMT, AWMSGLVLYLLTIATAFLGYV, and FFVLHFILPFIGCIIIVLHIF. Residues histidine 82 and histidine 96 each contribute to the heme b site. Residues histidine 178 and histidine 192 each coordinate heme b. An a ubiquinone-binding site is contributed by histidine 197. The next 4 membrane-spanning stretches (helical) occupy residues 219-239, 285-305, 323-343, and 347-367; these read MLMTDAKCLSYLIGLIFLQAA, GLLVFMSSLINLGLLSEIRAL, GWVIIWVYSMIFLIIIGSAIP, and YILYGRLATILYLTTGLVLCL.

The protein belongs to the cytochrome b family. As to quaternary structure, the main subunits of complex b-c1 are: cytochrome b, cytochrome c1 and the Rieske protein. Requires heme b as cofactor.

It is found in the mitochondrion inner membrane. Functionally, component of the ubiquinol-cytochrome c reductase complex (complex III or cytochrome b-c1 complex) that is part of the mitochondrial respiratory chain. The b-c1 complex mediates electron transfer from ubiquinol to cytochrome c. Contributes to the generation of a proton gradient across the mitochondrial membrane that is then used for ATP synthesis. This chain is Cytochrome b (MT-CYB), found in Toxoplasma gondii.